Here is a 345-residue protein sequence, read N- to C-terminus: 3-dehydroquinate synthase (345 aa).

NAD(+) contacts are provided by residues 86–90 (GALLD), 110–111 (TT), lysine 123, and lysine 132. Zn(2+) is bound by residues glutamate 165, histidine 229, and histidine 243.

This sequence belongs to the sugar phosphate cyclases superfamily. Dehydroquinate synthase family. It depends on NAD(+) as a cofactor. Requires Co(2+) as cofactor. The cofactor is Zn(2+).

It localises to the cytoplasm. The catalysed reaction is 7-phospho-2-dehydro-3-deoxy-D-arabino-heptonate = 3-dehydroquinate + phosphate. The protein operates within metabolic intermediate biosynthesis; chorismate biosynthesis; chorismate from D-erythrose 4-phosphate and phosphoenolpyruvate: step 2/7. In terms of biological role, catalyzes the conversion of 3-deoxy-D-arabino-heptulosonate 7-phosphate (DAHP) to dehydroquinate (DHQ). This chain is 3-dehydroquinate synthase, found in Pyrobaculum aerophilum (strain ATCC 51768 / DSM 7523 / JCM 9630 / CIP 104966 / NBRC 100827 / IM2).